Consider the following 79-residue polypeptide: UPF0180 protein BCB4264_A1446 (79 aa).

It belongs to the UPF0180 family.

In Bacillus cereus (strain B4264), this protein is UPF0180 protein BCB4264_A1446.